Reading from the N-terminus, the 318-residue chain is Pantothenate kinase (318 aa).

96-103 contacts ATP; the sequence is GSVAVGKS.

This sequence belongs to the prokaryotic pantothenate kinase family.

It is found in the cytoplasm. It carries out the reaction (R)-pantothenate + ATP = (R)-4'-phosphopantothenate + ADP + H(+). The protein operates within cofactor biosynthesis; coenzyme A biosynthesis; CoA from (R)-pantothenate: step 1/5. This Rhodopseudomonas palustris (strain ATCC BAA-98 / CGA009) protein is Pantothenate kinase.